We begin with the raw amino-acid sequence, 172 residues long: MISPLFFASEGGFGLNLDLFDANIVNLAIVIFGLYKFLPPFVGGILERRRVAILADLKDAEERLLKATEALAHAKKDLAAAHQKAEQIREDCKLRAEAIRLDSEKRTVEEMARVKQGATADLNAEASRASAQLRREAARMAIENALSALPGKLNADAQAQLVSQSIKNLGEA.

A helical membrane pass occupies residues 27–47; sequence LAIVIFGLYKFLPPFVGGILE.

It belongs to the ATPase B chain family. In terms of assembly, F-type ATPases have 2 components, F(1) - the catalytic core - and F(0) - the membrane proton channel. F(1) has five subunits: alpha(3), beta(3), gamma(1), delta(1), epsilon(1). F(0) has four main subunits: a(1), b(1), b'(1) and c(10-14). The alpha and beta chains form an alternating ring which encloses part of the gamma chain. F(1) is attached to F(0) by a central stalk formed by the gamma and epsilon chains, while a peripheral stalk is formed by the delta, b and b' chains.

It is found in the cellular thylakoid membrane. In terms of biological role, f(1)F(0) ATP synthase produces ATP from ADP in the presence of a proton or sodium gradient. F-type ATPases consist of two structural domains, F(1) containing the extramembraneous catalytic core and F(0) containing the membrane proton channel, linked together by a central stalk and a peripheral stalk. During catalysis, ATP synthesis in the catalytic domain of F(1) is coupled via a rotary mechanism of the central stalk subunits to proton translocation. Its function is as follows. Component of the F(0) channel, it forms part of the peripheral stalk, linking F(1) to F(0). The protein is ATP synthase subunit b of Prochlorococcus marinus (strain MIT 9303).